The chain runs to 584 residues: Sensor histidine kinase/phosphatase LytS (584 aa).

The next 6 membrane-spanning stretches (helical) occupy residues 2-22 (LSLTMLLLERVGLIIILAYVL), 42-62 (WQLCIIFSLFALMSNLTGIVI), 92-112 (VAGLVGGPFVGLFVGVISGIF), 121-141 (AQVYLISSIFIGIIAGYFGLQ), 154-174 (SAMIGIVMEMIQMLSILTFSH), and 186-206 (IALPMIIVNSVGTAIFMSIII). A GAF domain is found at 311 to 363 (HPNCPLRAAIVIPLEMHGSIVGTLKMYFTNPNDLTFVERQLAEGLANIFSSQI). A Histidine kinase domain is found at 379–461 (EIKSLQAQVS…RYPGRFNINI (83 aa)). Phosphohistidine; by autocatalysis is present on histidine 390.

Autophosphorylated on His-390.

It is found in the cell membrane. It catalyses the reaction ATP + protein L-histidine = ADP + protein N-phospho-L-histidine.. Its function is as follows. Member of the two-component regulatory system LytR/LytS that regulates genes involved in autolysis, programmed cell death, biofilm formation and cell wall metabolism. Also participates in sensing and responding to host defense cationic antimicrobial peptides (HDPs). Functions as a sensor protein kinase which is autophosphorylated at a histidine residue and transfers its phosphate group to the conserved aspartic acid residue in the regulatory domain of LytR. In turn, LytR binds to the upstream promoter regions of target genes including lrgA and lrgB, to positively regulate their expression. Also possesses a phosphatase activity that dephosphorylates and thus inactivates LytR. In Staphylococcus aureus (strain USA300), this protein is Sensor histidine kinase/phosphatase LytS (lytS).